Consider the following 262-residue polypeptide: Tetrahydromethanopterin S-methyltransferase subunit C (262 aa).

A run of 6 helical transmembrane segments spans residues 35–57 (FVPS…AGAN), 70–92 (GVPS…GVLI), 97–119 (GLPV…FIVG), 140–162 (LSLM…FSAD), 172–194 (GVIA…ACIG), and 214–236 (WLIF…FWLY).

This sequence belongs to the MtrC family. As to quaternary structure, the complex is composed of 8 subunits; MtrA, MtrB, MtrC, MtrD, MtrE, MtrF, MtrG and MtrH.

It is found in the cell membrane. It carries out the reaction 5-methyl-5,6,7,8-tetrahydromethanopterin + coenzyme M + 2 Na(+)(in) = 5,6,7,8-tetrahydromethanopterin + methyl-coenzyme M + 2 Na(+)(out). Its pathway is one-carbon metabolism; methanogenesis from CO(2); methyl-coenzyme M from 5,10-methylene-5,6,7,8-tetrahydromethanopterin: step 2/2. In terms of biological role, part of a complex that catalyzes the formation of methyl-coenzyme M and tetrahydromethanopterin from coenzyme M and methyl-tetrahydromethanopterin. This is an energy-conserving, sodium-ion translocating step. The sequence is that of Tetrahydromethanopterin S-methyltransferase subunit C from Methanococcus maripaludis (strain DSM 14266 / JCM 13030 / NBRC 101832 / S2 / LL).